The sequence spans 211 residues: Large ribosomal subunit protein uL3 (211 aa).

The interval glycine 125–glycine 148 is disordered.

This sequence belongs to the universal ribosomal protein uL3 family. As to quaternary structure, part of the 50S ribosomal subunit. Forms a cluster with proteins L14 and L19. Also contacts proteins L13 and L17.

Its function is as follows. One of the primary rRNA binding proteins, it binds directly near the 3'-end of the 23S rRNA, where it nucleates assembly of the 50S subunit. In Deinococcus radiodurans (strain ATCC 13939 / DSM 20539 / JCM 16871 / CCUG 27074 / LMG 4051 / NBRC 15346 / NCIMB 9279 / VKM B-1422 / R1), this protein is Large ribosomal subunit protein uL3 (rplC).